A 72-amino-acid chain; its full sequence is Translation initiation factor IF-1 (72 aa).

The 72-residue stretch at 1 to 72 folds into the S1-like domain; sequence MAKEDCIEME…TKGRIKFRSK (72 aa).

This sequence belongs to the IF-1 family. As to quaternary structure, component of the 30S ribosomal translation pre-initiation complex which assembles on the 30S ribosome in the order IF-2 and IF-3, IF-1 and N-formylmethionyl-tRNA(fMet); mRNA recruitment can occur at any time during PIC assembly.

It localises to the cytoplasm. In terms of biological role, one of the essential components for the initiation of protein synthesis. Stabilizes the binding of IF-2 and IF-3 on the 30S subunit to which N-formylmethionyl-tRNA(fMet) subsequently binds. Helps modulate mRNA selection, yielding the 30S pre-initiation complex (PIC). Upon addition of the 50S ribosomal subunit IF-1, IF-2 and IF-3 are released leaving the mature 70S translation initiation complex. In Francisella tularensis subsp. novicida (strain U112), this protein is Translation initiation factor IF-1.